The following is a 194-amino-acid chain: MPTSPGLTEEQRSDLMRRLATSAYKRGNFTLASGRQSEHYVNCKPVSLSGTGLLLISTAMLSHVEDQSVAVAGLTLGADPLVSGVAVAGSLAHRDLDALIVRKAAKGHGTGAWLEGPLPQPGALITVLEDVVTTGGSSLKAVNQLREAGYVVNRVITIVDREEGGAAAMDAAELELISLFRLSEISAFAAELNQ.

Residues R102, K103, K106, H108, and 129–137 (EDVVTTGGS) contribute to the 5-phospho-alpha-D-ribose 1-diphosphate site. Orotate-binding residues include T133 and R161.

It belongs to the purine/pyrimidine phosphoribosyltransferase family. PyrE subfamily. As to quaternary structure, homodimer. It depends on Mg(2+) as a cofactor.

It catalyses the reaction orotidine 5'-phosphate + diphosphate = orotate + 5-phospho-alpha-D-ribose 1-diphosphate. Its pathway is pyrimidine metabolism; UMP biosynthesis via de novo pathway; UMP from orotate: step 1/2. In terms of biological role, catalyzes the transfer of a ribosyl phosphate group from 5-phosphoribose 1-diphosphate to orotate, leading to the formation of orotidine monophosphate (OMP). This Synechococcus sp. (strain CC9902) protein is Orotate phosphoribosyltransferase.